The following is a 394-amino-acid chain: Probable peptidoglycan glycosyltransferase FtsW (394 aa).

Residues 1–27 lie on the Cytoplasmic side of the membrane; the sequence is MEFLQNIKKNYDEWTRITPQGLLYDRA. Residues 28–48 traverse the membrane as a helical segment; the sequence is LFWLFVILLLIGLVAVTSASI. The Periplasmic portion of the chain corresponds to 49–66; it reads PYSSRLFNDPFYFAKRDA. Residues 67-87 traverse the membrane as a helical segment; the sequence is IYVLLSLLTCYISLQISSSQW. The Cytoplasmic segment spans residues 88–93; that stretch reads EKWHAK. The chain crosses the membrane as a helical span at residues 94 to 114; that stretch reads IFLFSVILLLLVPFIGTSVNG. The Periplasmic segment spans residues 115–120; the sequence is AKRWIS. The helical transmembrane segment at 121–141 threads the bilayer; that stretch reads LGILNFQPAEFAKLALTCFLA. The Cytoplasmic segment spans residues 142–155; it reads SYFTRRYDEVRSRH. The next 2 membrane-spanning stretches (helical) occupy residues 156–176 and 177–197; these read VSIF…LLQP and DLGS…IVGA. A topological domain (cytoplasmic) is located at residue lysine 198. A helical transmembrane segment spans residues 199 to 219; sequence ILQFVGLIALGGILFVWLVLT. Residues 220 to 277 lie on the Periplasmic side of the membrane; it reads ASYRLKRFIGFLEPFKEPYGTGFQLTNSLIAFGRGEITGEGLGNSIQKLDYLPEAHTD. Residues 278–298 form a helical membrane-spanning segment; the sequence is FIMAIIGEEFGFIGILIVILL. Over 299–322 the chain is Cytoplasmic; that stretch reads LGLLIFRAMKIGRESLMLEQRFRG. A helical membrane pass occupies residues 323–343; it reads FFALGIGFWIFFQGFVNLGMA. Over 344–353 the chain is Periplasmic; it reads LGMLPTKGLT. Residues 354–374 form a helical membrane-spanning segment; it reads FPLVSYGGSSIIIMSATIGIL. Residues 375–394 lie on the Cytoplasmic side of the membrane; that stretch reads LRIDHENRLFRIGQARLRDD.

This sequence belongs to the SEDS family. FtsW subfamily.

It localises to the cell inner membrane. The catalysed reaction is [GlcNAc-(1-&gt;4)-Mur2Ac(oyl-L-Ala-gamma-D-Glu-L-Lys-D-Ala-D-Ala)](n)-di-trans,octa-cis-undecaprenyl diphosphate + beta-D-GlcNAc-(1-&gt;4)-Mur2Ac(oyl-L-Ala-gamma-D-Glu-L-Lys-D-Ala-D-Ala)-di-trans,octa-cis-undecaprenyl diphosphate = [GlcNAc-(1-&gt;4)-Mur2Ac(oyl-L-Ala-gamma-D-Glu-L-Lys-D-Ala-D-Ala)](n+1)-di-trans,octa-cis-undecaprenyl diphosphate + di-trans,octa-cis-undecaprenyl diphosphate + H(+). It participates in cell wall biogenesis; peptidoglycan biosynthesis. Functionally, peptidoglycan polymerase that is essential for cell division. In Haemophilus influenzae (strain ATCC 51907 / DSM 11121 / KW20 / Rd), this protein is Probable peptidoglycan glycosyltransferase FtsW.